Reading from the N-terminus, the 301-residue chain is Homoserine O-acetyltransferase (301 aa).

C142 (acyl-thioester intermediate) is an active-site residue. Positions 163 and 192 each coordinate substrate. H235 (proton acceptor) is an active-site residue. E237 is an active-site residue. R249 contributes to the substrate binding site.

This sequence belongs to the MetA family.

The protein localises to the cytoplasm. The enzyme catalyses L-homoserine + acetyl-CoA = O-acetyl-L-homoserine + CoA. It functions in the pathway amino-acid biosynthesis; L-methionine biosynthesis via de novo pathway; O-acetyl-L-homoserine from L-homoserine: step 1/1. Functionally, transfers an acetyl group from acetyl-CoA to L-homoserine, forming acetyl-L-homoserine. This chain is Homoserine O-acetyltransferase, found in Bacillus cytotoxicus (strain DSM 22905 / CIP 110041 / 391-98 / NVH 391-98).